The primary structure comprises 492 residues: Monocarboxylate transporter 3 (492 aa).

Over 1-14 (MGAGGPRRGAGPPD) the chain is Cytoplasmic. A helical transmembrane segment spans residues 15-35 (GGWGWVVLGACFVVTGFAYGF). At 36-58 (PKAVSVFFRELKRDFGAGYSDTA) the chain is on the extracellular side. The chain crosses the membrane as a helical span at residues 59-79 (WVSSIMLAMLYGTGPLSSILV). The Cytoplasmic portion of the chain corresponds to 80–85 (TRFGCR). Residues 86–106 (PVMLAGGLLASAGMILASFAS) traverse the membrane as a helical segment. The Extracellular segment spans residues 107 to 115 (RLVELYLTA). Residues 116-136 (GVLTGLGLALNFQPSLIMLGL) traverse the membrane as a helical segment. The Cytoplasmic portion of the chain corresponds to 137 to 146 (YFERRRPLAN). The helical transmembrane segment at 147–167 (GLAAAGSPVFLSMLSPLGQLL) threads the bilayer. Residues 168–172 (GERFG) are Extracellular-facing. Residues 173–193 (WRGGFLLFGGLLLHCCACGAV) traverse the membrane as a helical segment. Topologically, residues 194 to 228 (MRPPPGPPPRRDPSPHGGPARRRRLLDVAVCTDRA) are cytoplasmic. A helical transmembrane segment spans residues 229–249 (FVVYVVTKFLMALGLFVPAIL). Over 250–257 (LVNYAKDA) the chain is Extracellular. Residues 258-278 (GVPDAEAAFLLSIVGFVDIVA) form a helical membrane-spanning segment. Residues 279-293 (RPACGALAGLGRLRP) are Cytoplasmic-facing. The chain crosses the membrane as a helical span at residues 294-314 (HVPYLFSLALLANGLTDLISA). At 315 to 318 (RARS) the chain is on the extracellular side. The chain crosses the membrane as a helical span at residues 319 to 339 (YGTLVAFCIAFGLSYGMVGAL). Residues 340 to 352 (QFEVLMATVGAPR) are Cytoplasmic-facing. A helical transmembrane segment spans residues 353–373 (FPSALGLVLLVEAVAVLIGPP). The Extracellular segment spans residues 374-386 (SAGRLVDALKNYE). Residues 387 to 407 (IIFYLAGSEVALAGVFMAVTT) traverse the membrane as a helical segment. The Cytoplasmic segment spans residues 408-492 (YCCLRCSKNI…GGHEARGQKA (85 aa)). The disordered stretch occupies residues 419-492 (SGRSAEGGAS…GGHEARGQKA (74 aa)). Basolateral sorting signal regions lie at residues 426–460 (GASD…VLSP) and 461–482 (RAGS…HESI). A compositionally biased stretch (basic and acidic residues) spans 476–492 (ELDHESIGGHEARGQKA).

This sequence belongs to the major facilitator superfamily. Monocarboxylate porter (TC 2.A.1.13) family. Expressed exclusively in retinal pigment epithelium and choroid plexus epithelium.

It is found in the basolateral cell membrane. The enzyme catalyses (S)-lactate(in) + H(+)(in) = (S)-lactate(out) + H(+)(out). Functionally, probable retinal pigment epithelium (RPE)-specific proton-coupled L-lactate transporter. May facilitate transport of lactate and H(+) out of the retina and could therefore play an essential role in maintenance of metabolic and ionic homeostasis of the outer retina. This chain is Monocarboxylate transporter 3 (Slc16a8), found in Mus musculus (Mouse).